The primary structure comprises 618 residues: Kelch-like protein 40b (618 aa).

Positions 33–100 (VDCVLKIKDK…LYTSNINVTE (68 aa)) constitute a BTB domain. In terms of domain architecture, BACK spans 135–237 (CLAIFRLGLM…PRDYFVKNVE (103 aa)). Over residues 264–284 (PELKKTKNKKSPSEEGQKKGD) the composition is skewed to basic and acidic residues. A disordered region spans residues 264–297 (PELKKTKNKKSPSEEGQKKGDEEEVEEEEEQEER). Residues 285–295 (EEEVEEEEEQE) show a composition bias toward acidic residues. Kelch repeat units follow at residues 356–408 (QIFV…EAEN), 409–458 (FIFV…SHNE), 459–506 (MIYV…IHKN), 508–553 (IYVV…SVSG), and 555–608 (LYAV…VLGV).

The protein belongs to the KLHL40 family. As to quaternary structure, component of the BCR(KLHL40) E3 ubiquitin ligase complex. As to expression, expressed in skeletal muscle. Detected in the eye at much lower levels.

It is found in the cytoplasm. The protein resides in the myofibril. It localises to the sarcomere. Its subcellular location is the a band. The protein localises to the i band. Functionally, substrate-specific adapter of a BCR (BTB-CUL3-RBX1) E3 ubiquitin ligase complex. Required for skeletal muscle development. The protein is Kelch-like protein 40b (klhl40b) of Danio rerio (Zebrafish).